The primary structure comprises 708 residues: Chaperonin-containing T-complex member BBS12 (708 aa).

Belongs to the TCP-1 chaperonin family. BBS12 subfamily. Component of the chaperonin-containing T-complex (TRiC), a heterooligomeric complex of about 850 to 900 kDa that forms two stacked rings, 12 to 16 nm in diameter. Interacts with MKKS.

Its subcellular location is the cell projection. The protein localises to the cilium. Component of the chaperonin-containing T-complex (TRiC), a molecular chaperone complex that assists the folding of proteins upon ATP hydrolysis. As part of the TRiC complex may play a role in the assembly of BBSome, a complex involved in ciliogenesis regulating transports vesicles to the cilia. Involved in adipogenic differentiation. The sequence is that of Chaperonin-containing T-complex member BBS12 (Bbs12) from Mus musculus (Mouse).